The sequence spans 333 residues: Endo-1,4-beta-xylanase (333 aa).

The signal sequence occupies residues 1-17 (MYLVAFMLLAILPTGYC). The region spanning 18–330 (QLNTLAVRAG…KPAYQGIVDG (313 aa)) is the GH10 domain. The Proton donor role is filled by glutamate 147. The active-site Nucleophile is glutamate 252.

This sequence belongs to the glycosyl hydrolase 10 (cellulase F) family.

The protein resides in the secreted. The catalysed reaction is Endohydrolysis of (1-&gt;4)-beta-D-xylosidic linkages in xylans.. It functions in the pathway glycan degradation; xylan degradation. In terms of biological role, has xylanase activity. Seems to be involved in the release of sugars from the hemicellulolytic fraction in the compost. This Agaricus bisporus (White button mushroom) protein is Endo-1,4-beta-xylanase (xlnA).